The sequence spans 93 residues: Large ribosomal subunit protein bL31 (93 aa).

The interval Gly68–Asp93 is disordered. Residues Ala74–Asp93 show a composition bias toward basic and acidic residues.

This sequence belongs to the bacterial ribosomal protein bL31 family. Type A subfamily. In terms of assembly, part of the 50S ribosomal subunit.

Binds the 23S rRNA. The chain is Large ribosomal subunit protein bL31 from Prochlorococcus marinus (strain MIT 9303).